We begin with the raw amino-acid sequence, 439 residues long: AT-hook motif nuclear-localized protein 13 (439 aa).

Disordered regions lie at residues 1 to 46 (MDSR…NSYN), 69 to 216 (QRLP…LGGT), and 342 to 439 (GRKQ…NSPQ). Composition is skewed to low complexity over residues 9–31 (QQQQ…QQQQ) and 79–95 (PHQP…PQQQ). Positions 109-120 (SPSSVAATQQHS) are enriched in polar residues. Residues 130–139 (VKKKRGRPRK) show a composition bias toward basic residues. Positions 131 to 139 (KKKRGRPRK) match the Bipartite nuclear localization signal motif. Positions 131–143 (KKKRGRPRKYAAD) form a DNA-binding region, a.T hook 1. 2 stretches are compositionally biased toward gly residues: residues 143 to 152 (DGGGGGGGGS) and 171 to 183 (YGGG…GGDS). The segment at residues 196 to 208 (KRNRGRPPGSGKK) is a DNA-binding region (a.T hook 2). Residues 217 to 359 (GGVGFTPHVI…GRAQNTPEPA (143 aa)) enclose the PPC domain. Over residues 347-357 (QSAGRAQNTPE) the composition is skewed to polar residues. 2 stretches are compositionally biased toward low complexity: residues 376–386 (SPRSQGQQHSS) and 403–416 (NNNN…FGNS). Polar residues predominate over residues 428–439 (MYQNLWPGNSPQ).

The protein localises to the nucleus. In terms of biological role, transcription factor that specifically binds AT-rich DNA sequences related to the nuclear matrix attachment regions (MARs). The chain is AT-hook motif nuclear-localized protein 13 from Arabidopsis thaliana (Mouse-ear cress).